The following is a 271-amino-acid chain: Na(+), Li(+), K(+)/H(+) antiporter subunit B (271 aa).

The next 7 membrane-spanning stretches (helical) occupy residues 2–22 (ILLT…AIIF), 36–56 (LPQV…FLVG), 94–114 (WVYL…PSLI), 130–150 (PFML…LGTW), 152–172 (IVMG…VIIQ), 193–213 (STIT…SIPG), and 216–236 (ALMD…ITVM). The disordered stretch occupies residues 252–271 (TPHLSYSKAPPPSKGDNNAL).

This sequence belongs to the UmpA/UmpB family. In terms of assembly, heterodimer composed of UmpA and UmpB.

It localises to the cell membrane. In terms of biological role, part of a two-component antiporter that catalyzes the efflux of Na(+), Li(+) and K(+) in exchange for external protons. Shows a preference for Na(+), followed by K(+) and Li(+). This Vreelandella zhaodongensis (Halomonas zhaodongensis) protein is Na(+), Li(+), K(+)/H(+) antiporter subunit B.